A 518-amino-acid polypeptide reads, in one-letter code: Protein FAM98A (518 aa).

2 disordered regions span residues 300–415 and 434–518; these read GRVP…GHSS and GSGY…HYTS. The span at 302 to 311 shows a compositional bias: basic and acidic residues; the sequence is VPDRGGRPNE. Composition is skewed to gly residues over residues 349 to 364, 383 to 396, and 405 to 415; these read GGRG…GGRG, WTDG…GYQD, and QPGGYHGGHSS. Positions 447–459 are enriched in basic and acidic residues; that stretch reads RYQDGGHHGDRGG. Gly residues predominate over residues 460-484; sequence GRGGRGGRGGRGGRAGQGGGWGGRG. Positions 488–504 are enriched in low complexity; it reads YHQGGQFEQHFQHGGYQ. Positions 505–518 are enriched in polar residues; it reads YNHSGFGQGRHYTS.

This sequence belongs to the FAM98 family. Interacts (via N- and C-terminus) with DDX1. Interacts (via N- and C-terminus) with C14orf166. Interacts with FAM98B. Interacts with PLEKHM1 (via N- and C-terminus).

Functionally, positively stimulates PRMT1-induced protein arginine methylation. Involved in skeletal homeostasis. Positively regulates lysosome peripheral distribution and ruffled border formation in osteoclasts. The protein is Protein FAM98A of Pongo abelii (Sumatran orangutan).